We begin with the raw amino-acid sequence, 240 residues long: Mannose-binding protein C (240 aa).

The N-terminal stretch at 1 to 18 is a signal peptide; that stretch reads MSLFPSLHLLLLIVMTAS. 2 Collagen-like domains span residues 39–61 and 67–97; these read SPGI…KGEP and GLQG…GDSG. Pro46 carries the hydroxyproline modification. Residues 48–102 form a disordered region; that stretch reads KDGLDGAKGEKGEPGQGLIGLQGLPGMVGPQGSPGIPGLPGLKGQKGDSGIDPGN. Residues 49-60 are compositionally biased toward basic and acidic residues; the sequence is DGLDGAKGEKGE. Pro72, Pro81, and Pro87 each carry hydroxyproline. Residues 104-122 adopt a coiled-coil conformation; the sequence is LANLRSELDNIKKWLIFAQ. Residues 126-237 enclose the C-type lectin domain; the sequence is VGKKLYLTNG…CSSQLSAVCE (112 aa). 2 disulfides stabilise this stretch: Cys147–Cys236 and Cys214–Cys228.

In terms of assembly, interacts with MASP1 and MASP2. Interacts with MEP1A and MEP1B and may inhibit their catalytic activity. Forms oligomeric complexes of 2 or 3 homotrimers. Expressed in liver. Weakly expressed in kidney and testis.

Its subcellular location is the secreted. In terms of biological role, calcium-dependent lectin involved in innate immune defense. Binds mannose, fucose and N-acetylglucosamine on different microorganisms and activates the lectin complement pathway. Binds to late apoptotic cells, as well as to apoptotic blebs and to necrotic cells, but not to early apoptotic cells, facilitating their uptake by macrophages. According to some authors, it only binds mannose. In Sus scrofa (Pig), this protein is Mannose-binding protein C.